Here is a 231-residue protein sequence, read N- to C-terminus: MFLRNVRVISLNSRRLFRTMSTVKGKPEDAKIIEARHVKETSDCKWIGLQKIIYKDPNGKEREWDSAVRTTRSSGGVDGIGILTILKYKDGKPDEILLQKQFRPPVEGVCIEMPAGLIDAGEDIDTAALRELKEETGYSGKIISKSPTVFNDPGFTNTNLCLVTVEVDMSLPENQKPVTQLEDNEFIECFSVELHKFPDEMVKLDQQGYKLDARVQNVAQGILMAKQYHIK.

F2 bears the N-acetylserine mark. Residues W46, 64 to 65, R69, and R103 each bind substrate; that span reads WD. In terms of domain architecture, Nudix hydrolase spans 75 to 214; sequence GGVDGIGILT…DQQGYKLDAR (140 aa). A115 contacts Mg(2+). The short motif at 116-137 is the Nudix box element; sequence GLIDAGEDIDTAALRELKEETG. L117 provides a ligand contact to substrate. 2 residues coordinate Mg(2+): E131 and E135. Substrate is bound at residue D152. Residue E185 coordinates Mg(2+).

Belongs to the Nudix hydrolase family. NudF subfamily. Mg(2+) is required as a cofactor. It depends on Mn(2+) as a cofactor.

The catalysed reaction is ADP-D-ribose + H2O = D-ribose 5-phosphate + AMP + 2 H(+). This chain is ADP-ribose pyrophosphatase (YSA1), found in Saccharomyces cerevisiae (strain ATCC 204508 / S288c) (Baker's yeast).